Reading from the N-terminus, the 437-residue chain is MMSVTVEILENLERKVVLSLPWSEINAETDKKLKQTQRRAKIDGFRPGKAPLKMIAQMYGASAQNDVINELVQRRFYDVAVAQELKVAGYPRFEGVEEQDDKESFKVAAIFEVFPEVVIGDLSAQEVEKVTASVGDAEVDQTVEILRKQRTRFNHVDREARNGDRVIIDFEGKIDGEPFAGGASKNYAFVLGAGQMLPEFEAGVVGMKAGESKDVTVNFPEEYHGKDVAGKTAVFTITLNNVSEPTLPEVDADFAKALGIADGDVAKMREEVKKNVSREVERRVNEQTKESVMNALIKAVELKVPVALVNEEAARLANEMKQNFVNQGMTDAANLDLPLDMFKEQAERRVSLGLILAKLVDENKLEPTEEQIKAVVANFAESYEDPQEVIDWYYADTSRLQAPTSLAVESNVVDFVLGKAKVNKKALSFDEVMGAQA.

The PPIase FKBP-type domain maps to 163 to 248 (GDRVIIDFEG…LNNVSEPTLP (86 aa)).

The protein belongs to the FKBP-type PPIase family. Tig subfamily.

It localises to the cytoplasm. The enzyme catalyses [protein]-peptidylproline (omega=180) = [protein]-peptidylproline (omega=0). In terms of biological role, involved in protein export. Acts as a chaperone by maintaining the newly synthesized protein in an open conformation. Functions as a peptidyl-prolyl cis-trans isomerase. This is Trigger factor from Neisseria gonorrhoeae (strain NCCP11945).